Reading from the N-terminus, the 607-residue chain is (R)-limonene synthase 1, chloroplastic (607 aa).

A chloroplast-targeting transit peptide spans 1–52; the sequence is MSSCINPSTLATSVNGFKCLPLATNRAAIRIMAKNKPVQCLVSTKYDNLTVD. Residues D343 and D347 each coordinate Mn(2+). The substrate site is built by D343, D347, R485, D488, and K504. The DDXXD motif motif lies at 343-347; the sequence is DDIYD. D488 provides a ligand contact to Mn(2+).

The protein belongs to the terpene synthase family. Requires Mg(2+) as cofactor. Mn(2+) is required as a cofactor.

It is found in the plastid. The protein resides in the chloroplast. It catalyses the reaction (2E)-geranyl diphosphate = (4R)-limonene + diphosphate. With respect to regulation, inhibited by 2-fluorogeranyl diphosphate (FGPP) and 2-fluoroneryl diphosphate (FNPP). Catalyzes the conversion of geranyl diphosphate to (+)-(4R)-limonene. Produces exclusively the (+)-enantiomer. Can use neryl diphosphate as substrate. Has no activity with farnesyl diphosphate. The chain is (R)-limonene synthase 1, chloroplastic from Citrus sinensis (Sweet orange).